We begin with the raw amino-acid sequence, 212 residues long: Uridine kinase (212 aa).

13–20 (GASASGKS) contacts ATP.

The protein belongs to the uridine kinase family.

It is found in the cytoplasm. The enzyme catalyses uridine + ATP = UMP + ADP + H(+). It carries out the reaction cytidine + ATP = CMP + ADP + H(+). It functions in the pathway pyrimidine metabolism; CTP biosynthesis via salvage pathway; CTP from cytidine: step 1/3. It participates in pyrimidine metabolism; UMP biosynthesis via salvage pathway; UMP from uridine: step 1/1. The protein is Uridine kinase of Shewanella amazonensis (strain ATCC BAA-1098 / SB2B).